A 296-amino-acid chain; its full sequence is Cutinase est1 (296 aa).

Positions 1–35 (MSVTTPRREASLLSRAVAVAAAAAATVALAAPAQA) are cleaved as a signal peptide. The disordered stretch occupies residues 36–57 (ANPYERGPNPTESMLEARSGPF). Tyrosine 95 contacts poly(ethylene terephthalate). The active-site Nucleophile is serine 165. Residues methionine 166 and tryptophan 190 each contribute to the poly(ethylene terephthalate) site. Residues aspartate 211 and histidine 243 each act as charge relay system in the active site. The cysteines at positions 276 and 294 are disulfide-linked.

It belongs to the AB hydrolase superfamily. In terms of assembly, monomer.

It localises to the secreted. It is found in the periplasm. The catalysed reaction is (ethylene terephthalate)(n) + H2O = (ethylene terephthalate)(n-1) + 4-[(2-hydroxyethoxy)carbonyl]benzoate + H(+). The enzyme catalyses a butanoate ester + H2O = an aliphatic alcohol + butanoate + H(+). It carries out the reaction cutin + H2O = cutin monomers.. Catalyzes the hydrolysis of cutin, a polyester that forms the structure of plant cuticle. Shows esterase activity towards p-nitrophenol-linked aliphatic esters (pNP-aliphatic esters). Capable of degrading the plastic poly(ethylene terephthalate) (PET), the most abundant polyester plastic in the world. Can also depolymerize the synthetic polyester poly(epsilon-caprolactone) (PCL). The polypeptide is Cutinase est1 (Thermobifida alba (Thermomonospora alba)).